The chain runs to 511 residues: MEVGTVVQEEMKFRGSEFAVKVEMAERLLIVEISDVVTADQWRGEFGPAYIEDLTRKTGNFKQFPVFCSMLESAVHKSSDSVTLDLLTYSDLELLRNRKAGVVGRPRAQPQSPALSAKRYLILIYTVEFDRIHYPLPLPYLGKPDPAELQKEIRALRSELKTLGLRGDHKVSDQETRKLRTELALVRDEKEALAKALDRLQMVGSGSAPGARGLREAVHSLEEQLLKERAKSQRSAIKKSQEQRLLVEQLEELRASERALRIRVKSLTTELALLRRGRATPVLSDRGGLRGDGVVHRSLSRERSLTRVGIRARSGSRERIEDRGRRSEERVRRADSSGSRNCITRPSPSPTGSRVPRFDPTAYIQDRQRRQKEAELKSQRKIRRDMLASPSLMERGRSRSREPVPQLMRAGSAGRGRSVSVESRRSRCSSEGSVAEFEELAKPLNSRGRKLMSNGPAVSRGRHINKKPMCSTPAQRMRAGDTSMDTGADLSEIDARLQALQDYMRDLDTGH.

The head domain stretch occupies residues 1–144 (MEVGTVVQEE…PLPLPYLGKP (144 aa)). Residues 147-272 (AELQKEIRAL…RVKSLTTELA (126 aa)) adopt a coiled-coil conformation. Disordered regions lie at residues 306-403 (TRVG…SREP) and 447-486 (RGRK…SMDT). Over residues 315-335 (GSRERIEDRGRRSEERVRRAD) the composition is skewed to basic and acidic residues. Polar residues predominate over residues 338-352 (GSRNCITRPSPSPTG). The span at 366 to 378 (DRQRRQKEAELKS) shows a compositional bias: basic and acidic residues.

It belongs to the CCDC61 family. As to quaternary structure, forms homodimers (via head domain).

The protein resides in the cytoplasm. It is found in the cytoskeleton. The protein localises to the microtubule organizing center. It localises to the centrosome. Its subcellular location is the centriolar satellite. The protein resides in the cilium basal body. Microtubule-binding centrosomal protein required for centriole cohesion, independently of the centrosome-associated protein/CEP250 and rootletin/CROCC linker. In interphase, required for anchoring microtubule at the mother centriole subdistal appendages and for centrosome positioning. During mitosis, may be involved in spindle assembly and chromatin alignment by regulating the organization of spindle microtubules into a symmetrical structure. Plays a non-essential role in ciliogenesis. The polypeptide is Centrosomal protein CCDC61 (Danio rerio (Zebrafish)).